Consider the following 243-residue polypeptide: Transcription factor TCP6 (243 aa).

Positions 1–55 are disordered; that stretch reads MVMEPKKNQNLPSFLNPSRQNQDNDKKRKQTEVKGFDIVVGEKRKKKENEEEDQE. Over residues 8-21 the composition is skewed to polar residues; that stretch reads NQNLPSFLNPSRQN. Over residues 22–35 the composition is skewed to basic and acidic residues; that stretch reads QDNDKKRKQTEVKG. The stretch at 42-66 forms a coiled coil; that stretch reads EKRKKKENEEEDQEIQILYEKEKKK. Residues 68-122 enclose the TCP domain; the sequence is NKDRHLKVEGRGRRVRLPPLCAARIYQLTKELGHKSDGETLEWLLQHAEPSILSA.

As to quaternary structure, interacts with SPL.

The protein resides in the nucleus. This is Transcription factor TCP6 (TCP6) from Arabidopsis thaliana (Mouse-ear cress).